The chain runs to 790 residues: MEKMSRVTTALGGSVLTGRTMHCHLDAPANAISVCRDAAQVVVAGRSIFKIYAIEEEQFVEKLNLRVGRKPSLNLSCADVVWHQMDENLLATAATNGVVVTWNLGRPSRNKQDQLFTEHKRTVNKVCFHPTEAHVLLSGSQDGFMKCFDLRRKDSVSTFSGQSESVRDVQFSIRDYFTFASTFENGNVQLWDIRRPDRCERMFTAHNGPVFCCDWHPEDRGWLATGGRDKMVKVWDMTTHRAKEMHCVQTIASVARVKWRPECRHHLATCSMMVDHNIYVWDVRRPFVPAAMFEEHRDVTTGIAWRHPHDPSFLLSGSKDSSLCQHLFRDASQPVERANPEGLCYGLFGDLAFAAKESLVAAESGRKPYTGDRRHPIFFKRKLDPAEPFAGLASSALSVFETEPGGGGMRWFVDTAERYALAGRPLAELCDHNAKVARELGRNQVAQTWTMLRIIYCSPGLVPTANLNHSVGKGGSCGLPLMNSFNLKDMAPGLGSETRLDRSKGDARSDTVLLDSSATLITNEDNEETEGSDVPADYLLGDVEGEEDELYLLDPEHAHPEDPECVLPQEAFPLRHEIVDTPPGPEHLQDKADSPHVSGSEADVASLAPVDSSFSLLSVSHALYDSRLPPDFFGVLVRDMLHFYAEQGDVQMAVSVLIVLGERVRKDIDEQTQEHWYTSYIDLLQRFRLWNVSNEVVKLSTSRAVSCLNQASTTLHVNCSHCKRPMSSRGWVCDRCHRCASMCAVCHHVVKGLFVWCQGCSHGGHLQHIMKWLEGSSHCPAGCGHLCEYS.

6 WD repeats span residues 72–112 (SLNL…RNKQ), 118–158 (EHKR…SVST), 161–201 (GQSE…RCER), 205–245 (AHNG…AKEM), 249–291 (QTIA…VPAA), and 295–338 (EHRD…VERA). Serine 155 carries the phosphoserine; by AMPK modification. Serine 470 and serine 496 each carry phosphoserine. A Phosphothreonine modification is found at threonine 581. Residues serine 594 and serine 598 each carry the phosphoserine modification. The segment at 718–740 (NCSHCKRPMSSRGWVCDRCHRCA) adopts a C4-type zinc-finger fold. Cysteine 719, cysteine 722, cysteine 733, cysteine 736, cysteine 743, cysteine 746, cysteine 757, cysteine 760, histidine 762, histidine 765, histidine 768, cysteine 779, cysteine 783, histidine 785, and cysteine 787 together coordinate Zn(2+). Residues 741-790 (SMCAVCHHVVKGLFVWCQGCSHGGHLQHIMKWLEGSSHCPAGCGHLCEYS) form an RING-type; atypical zinc finger.

It belongs to the WD repeat WDR24 family. Component of the GATOR2 subcomplex, composed of MIOS, SEC13, SEH1L, WDR24 and WDR59. The GATOR2 complex interacts with CASTOR1 and CASTOR2; the interaction is negatively regulated by arginine. The GATOR2 complex interacts with SESN1, SESN2 and SESN3; the interaction is negatively regulated by amino acids. SESN1, SESN2 and SESN3 convey leucine availability via direct interaction with SEH1L and WDR24. Phosphorylation at Ser-155 by AMPK in response to glucose deprivation inactivates WDR24 by promoting interaction with 14-3-3 proteins, such as YWHAG, preventing assembly of the GATOR2 complex. Post-translationally, autoubiquitinated; MIOS is required to prevent autoubiquitination.

The protein localises to the lysosome membrane. It catalyses the reaction S-ubiquitinyl-[E2 ubiquitin-conjugating enzyme]-L-cysteine + [acceptor protein]-L-lysine = [E2 ubiquitin-conjugating enzyme]-L-cysteine + N(6)-ubiquitinyl-[acceptor protein]-L-lysine.. The protein operates within protein modification; protein ubiquitination. With respect to regulation, the GATOR2 complex is negatively regulated by the upstream amino acid sensors CASTOR1 and SESN2, which sequester the GATOR2 complex in absence of amino acids. In the presence of abundant amino acids, GATOR2 is released from CASTOR1 and SESN2 and activated. Functionally, catalytic component of the GATOR2 complex, a multiprotein complex that acts as an activator of the amino acid-sensing branch of the mTORC1 signaling pathway. The GATOR2 complex indirectly activates mTORC1 through the inhibition of the GATOR1 subcomplex. GATOR2 probably acts as an E3 ubiquitin-protein ligase toward GATOR1. In the presence of abundant amino acids, the GATOR2 complex mediates ubiquitination of the NPRL2 core component of the GATOR1 complex, leading to GATOR1 inactivation. In the absence of amino acids, GATOR2 is inhibited, activating the GATOR1 complex. In addition to its role in regulation of the mTORC1 complex, promotes the acidification of lysosomes and facilitates autophagic flux. Within the GATOR2 complex, WDR24 constitutes the catalytic subunit that mediates 'Lys-6'-linked ubiquitination of NPRL2. This Homo sapiens (Human) protein is GATOR2 complex protein WDR24.